The primary structure comprises 285 residues: Secreted RxLR effector protein 106 (285 aa).

Positions 1–24 (MSVRYAGLLLAAVAVSAHINEVNS) are cleaved as a signal peptide. The RxLR-dEER signature appears at 42–54 (RDLRSADNGNEER). N-linked (GlcNAc...) asparagine glycosylation is found at asparagine 182 and asparagine 187. Residues 220–229 (IEGDKEKKGG) are compositionally biased toward basic and acidic residues. The segment at 220-262 (IEGDKEKKGGPDYVEGTESRGKKRGQTEAPDLEPGLTPKQKRL) is disordered. The short motif at 239–264 (RGKKRGQTEAPDLEPGLTPKQKRLKR) is the Bipartite nuclear localization signal element.

The protein belongs to the RxLR effector family. As to quaternary structure, interacts with host RCD1 and SRO1 transcription co-regulators.

Its subcellular location is the secreted. The protein resides in the host nucleus. In terms of biological role, secreted effector that suppresses pathogen-associated molecular pattern (PAMP)-triggered immunity (PTI) in host plants. Binds to RCD1 and SRO1 transcription co-regulators to attenuate transcriptional activation of salicylic acid (SA)-induced defense genes and alters plant growth responses to light. Suppresses SA signal transduction but not SA levels. In Hyaloperonospora arabidopsidis (strain Emoy2) (Downy mildew agent), this protein is Secreted RxLR effector protein 106.